Reading from the N-terminus, the 304-residue chain is Nicotinamide/nicotinic acid mononucleotide adenylyltransferase 2 (304 aa).

The NAD(+) site is built by Ser-16 and Phe-17. His-24 provides a ligand contact to ATP. Trp-92 and Thr-95 together coordinate NAD(+). 2 S-palmitoyl cysteine lipidation sites follow: Cys-161 and Cys-162. 5 residues coordinate NAD(+): Gly-197, Asp-199, Leu-209, Trp-210, and Arg-229. 268–271 is a binding site for ATP; sequence TKSR.

The protein belongs to the eukaryotic NMN adenylyltransferase family. As to quaternary structure, monomer. It depends on Mg(2+) as a cofactor.

It is found in the golgi apparatus membrane. The protein localises to the cytoplasmic vesicle membrane. It localises to the cytoplasm. Its subcellular location is the cell projection. The protein resides in the axon. The enzyme catalyses beta-nicotinamide D-ribonucleotide + ATP + H(+) = diphosphate + NAD(+). It catalyses the reaction nicotinate beta-D-ribonucleotide + ATP + H(+) = deamido-NAD(+) + diphosphate. It participates in cofactor biosynthesis; NAD(+) biosynthesis; NAD(+) from nicotinamide D-ribonucleotide: step 1/1. It functions in the pathway cofactor biosynthesis; NAD(+) biosynthesis; deamido-NAD(+) from nicotinate D-ribonucleotide: step 1/1. Nicotinamide/nicotinate-nucleotide adenylyltransferase that acts as an axon maintenance factor. Axon survival factor required for the maintenance of healthy axons: acts by delaying Wallerian axon degeneration, an evolutionarily conserved process that drives the loss of damaged axons. Catalyzes the formation of NAD(+) from nicotinamide mononucleotide (NMN) and ATP. Can also use the deamidated form; nicotinic acid mononucleotide (NaMN) as substrate but with a lower efficiency. Also catalyzes the reverse reaction, i.e. the pyrophosphorolytic cleavage of NAD(+). For the pyrophosphorolytic activity prefers NAD(+), NADH and NaAD as substrates and degrades nicotinic acid adenine dinucleotide phosphate (NHD) less effectively. Also acts as an activator of ADP-ribosylation by supporting the catalytic activity of PARP16 and promoting mono-ADP-ribosylation of ribosomes by PARP16. May be involved in the maintenance of axonal integrity. The sequence is that of Nicotinamide/nicotinic acid mononucleotide adenylyltransferase 2 (nmnat2) from Danio rerio (Zebrafish).